Reading from the N-terminus, the 77-residue chain is Conotoxin S6.11 (77 aa).

A signal peptide spans 1 to 19 (MEKLTILLLVAAVLMSTQA). Positions 20–50 (LIQGGLDERQKAKSNFFSKRKSNAESWWEGE) are excised as a propeptide. 3 disulfide bridges follow: C51–C65, C58–C69, and C64–C74.

It belongs to the conotoxin O2 superfamily. As to expression, expressed by the venom duct.

It localises to the secreted. This Conus striatus (Striated cone) protein is Conotoxin S6.11.